The chain runs to 346 residues: Lipase chaperone (346 aa).

Residues 10–30 (TIVFGVITSVLLLLLLIYYVF) traverse the membrane as a helical segment.

This sequence belongs to the lipase chaperone family.

The protein resides in the cell inner membrane. Functionally, may be involved in the folding of the extracellular lipase during its passage through the periplasm. The protein is Lipase chaperone (lifO) of Acinetobacter venetianus (strain ATCC 31012 / DSM 23050 / BCRC 14357 / CCUG 45561 / CIP 110063 / KCTC 2702 / LMG 19082 / RAG-1).